The sequence spans 239 residues: Uridylate kinase (239 aa).

12-15 (KLSG) serves as a coordination point for ATP. Residues 20–25 (GEKGFG) form an involved in allosteric activation by GTP region. Gly54 lines the UMP pocket. Residues Gly55 and Arg59 each contribute to the ATP site. UMP contacts are provided by residues Asp72 and 133–140 (TGNPFFST). Residues Tyr166 and Asp169 each coordinate ATP.

Belongs to the UMP kinase family. Homohexamer.

The protein localises to the cytoplasm. It catalyses the reaction UMP + ATP = UDP + ADP. Its pathway is pyrimidine metabolism; CTP biosynthesis via de novo pathway; UDP from UMP (UMPK route): step 1/1. Allosterically activated by GTP. Inhibited by UTP. Its function is as follows. Catalyzes the reversible phosphorylation of UMP to UDP. This Caldicellulosiruptor saccharolyticus (strain ATCC 43494 / DSM 8903 / Tp8T 6331) protein is Uridylate kinase.